Reading from the N-terminus, the 518-residue chain is Metal transporter Nramp1 (518 aa).

12 consecutive transmembrane segments (helical) span residues 35–55 (FLSHIGPGFMVCLAYLDPGNM), 68–88 (ELLWVILIGLIFALIIQSLSA), 107–127 (PVWVKTCLWLLAELAVIASDI), 131–151 (IGTGFAFNLLFHIPVWTGVLI), 172–192 (VVVALLVFVMAGCFFVEMSIV), 218–238 (IALLGALVMPHNLFLHSALVL), 255–275 (FFLFESGIALFVALLVNIAII), 315–337 (SATVYGVALLASGQSSTITGTYA), 357–377 (LMTRSIAIVPSLIVSIIGGSS), 382–402 (LIVIASMILSFELPFALIPLL), 418–438 (IYIVGFSWVLGFVIIGINIYF), and 458–478 (VLIGIVLFPLMLLYVVAVIYL).

The protein belongs to the NRAMP (TC 2.A.55) family.

The protein resides in the membrane. Functionally, probable metal transporter that may participate in the control of iron homeostasis. The chain is Metal transporter Nramp1 (NRAMP1) from Oryza sativa subsp. japonica (Rice).